A 305-amino-acid chain; its full sequence is DNA-directed RNA polymerase 35 kDa subunit (305 aa).

The protein belongs to the poxviridae DNA-directed RNA polymerase 35 kDa subunit family. The DNA-dependent RNA polymerase used for intermediate and late genes expression consists of eight subunits 147 kDa, 133 kDa, 35 kDa, 30 kDa, 22 kDa, 19 kDa, 18 kDa and 7 kDa totalling more than 500 kDa in mass. The same holoenzyme, with the addition of the transcription-specificity factor RAP94, is used for early gene expression.

It is found in the virion. The enzyme catalyses RNA(n) + a ribonucleoside 5'-triphosphate = RNA(n+1) + diphosphate. Functionally, part of the DNA-dependent RNA polymerase which catalyzes the transcription of viral DNA into RNA using the four ribonucleoside triphosphates as substrates. Responsible for the transcription of early, intermediate and late genes. DNA-dependent RNA polymerase associates with the early transcription factor (ETF), itself composed of D6 and A7, thereby allowing the early genes transcription. Late transcription, and probably also intermediate transcription, require newly synthesized RNA polymerase. The polypeptide is DNA-directed RNA polymerase 35 kDa subunit (OPG156) (Cynomys gunnisoni (Gunnison's prairie dog)).